The chain runs to 149 residues: Large ribosomal subunit protein uL15 (149 aa).

The span at 1–29 (MVSHLKKTRKLRGHVSHGHGRVGKHRKGG) shows a compositional bias: basic residues. The tract at residues 1–38 (MVSHLKKTRKLRGHVSHGHGRVGKHRKGGCRGGRGKAG) is disordered.

Belongs to the universal ribosomal protein uL15 family.

The protein is Large ribosomal subunit protein uL15 (RPL27A) of Tetrahymena thermophila.